Reading from the N-terminus, the 128-residue chain is Large ribosomal subunit protein mL51 (128 aa).

A mitochondrion-targeting transit peptide spans 1–31 (MAGSVPWAASRRLWGWVPSACRSFSLGVPRL).

This sequence belongs to the mitochondrion-specific ribosomal protein mL51 family. In terms of assembly, component of the mitochondrial ribosome large subunit (39S) which comprises a 16S rRNA and about 50 distinct proteins. Interacts with OXA1L.

It is found in the mitochondrion. The polypeptide is Large ribosomal subunit protein mL51 (Mrpl51) (Mus musculus (Mouse)).